Reading from the N-terminus, the 108-residue chain is Protein YcgL (108 aa).

The YcgL domain occupies 12–96; sequence MFCVIYRSSK…PPEDLLKQHL (85 aa).

The sequence is that of Protein YcgL from Escherichia coli (strain K12 / MC4100 / BW2952).